A 517-amino-acid chain; its full sequence is GMP synthase [glutamine-hydrolyzing] (517 aa).

A Glutamine amidotransferase type-1 domain is found at 9–199 (RILILDFGSQ…VLNACGCEGL (191 aa)). C86 (nucleophile) is an active-site residue. Catalysis depends on residues H173 and E175. The region spanning 200-392 (WTSASIIEDA…LGLPYNMLYR (193 aa)) is the GMPS ATP-PPase domain. Position 227 to 233 (227 to 233 (SGGVDSS)) interacts with ATP.

In terms of assembly, homodimer.

The enzyme catalyses XMP + L-glutamine + ATP + H2O = GMP + L-glutamate + AMP + diphosphate + 2 H(+). It participates in purine metabolism; GMP biosynthesis; GMP from XMP (L-Gln route): step 1/1. In terms of biological role, catalyzes the synthesis of GMP from XMP. The protein is GMP synthase [glutamine-hydrolyzing] of Vibrio atlanticus (strain LGP32) (Vibrio splendidus (strain Mel32)).